The sequence spans 1401 residues: Bifunctional 3'-5' exonuclease/ATP-dependent helicase WRN (1401 aa).

Residues 1-271 form an interaction with WRNIP1 region; the sequence is METTSLQRKF…FPVTCRNLET (271 aa). The KBM 1 signature appears at 6–18; that stretch reads LQRKFPEWMSMQS. A 3'-5' exonuclease domain is found at 51-223; it reads YEASDCSFLS…GLIIYQKLGN (173 aa). Residues Asp-76 and Glu-78 each contribute to the Zn(2+) site. Residue Lys-148 forms a Glycyl lysine isopeptide (Lys-Gly) (interchain with G-Cter in SUMO2) linkage. Asp-210 lines the Zn(2+) pocket. Residues Lys-235 and Lys-246 each participate in a glycyl lysine isopeptide (Lys-Gly) (interchain with G-Cter in SUMO2) cross-link. Residues 401–427 form a disordered region; sequence QAKEEKYNDVSHQLSEHLSPNDDENDS. Phosphoserine is present on residues Ser-419, Ser-433, and Ser-444. The interval 464-492 is disordered; that stretch reads GTNGRLPPEEEDGHGNEAIKEEQEEEDHL. A Helicase ATP-binding domain is found at 522–688; sequence HSVLEERRDN…ISCLNLKDPQ (167 aa). ATP is bound at residue 535–542; that stretch reads MATGYGKS. The DEAH box signature appears at 632–635; sequence DEAH. One can recognise a Helicase C-terminal domain in the interval 713-866; the sequence is DLKPFLVRKA…KLKMMVKMEK (154 aa). Zn(2+) contacts are provided by Cys-873, Cys-900, Cys-901, and Cys-904. Positions 952–958 are interaction with DNA; the sequence is RGSNSQR. The tract at residues 1041 to 1106 is disordered; that stretch reads LLPSSNPVSP…PSPGTSSSPL (66 aa). The span at 1043 to 1069 shows a compositional bias: polar residues; that stretch reads PSSNPVSPETTQHSSNQNPAGLTTKQS. Residues 1070 to 1081 are compositionally biased toward basic and acidic residues; it reads NLERTHSYKVPE. Ser-1098 is modified (phosphoserine). One can recognise an HRDC domain in the interval 1115–1194; it reads LDARTGLYAR…KHFCQVTSVQ (80 aa). The span at 1323–1332 shows a compositional bias: polar residues; that stretch reads GSDSRTQPPC. The interval 1323-1401 is disordered; it reads GSDSRTQPPC…AKTKKKGLFS (79 aa). Basic and acidic residues predominate over residues 1348–1358; it reads ESCKESKEAVT. Phosphoserine is present on Ser-1364. A KBM 2 motif is present at residues 1367–1376; the sequence is SKRKLPEWFA. The segment covering 1382–1392 has biased composition (polar residues); sequence SADTGSSSSMA. The XLM motif lies at 1388–1401; it reads SSSMAKTKKKGLFS.

This sequence belongs to the helicase family. RecQ subfamily. As to quaternary structure, monomer, and homooligomer. May exist as homodimer, homotrimer, homotetramer and/or homohexamer. Homotetramer, or homohexamer, when bound to DNA. Interacts via its N-terminal domain with WRNIP1. Interacts with EXO1, PCNA and SUPV3L1. Interacts with PML (isoform PML-4). Interacts (via KBM motif) with XRCC5 and XRCC6; promoting recruitment to DNA damage sites. Interacts with RECQL5; this interaction stimulates WRN helicase activity on DNA fork duplexes. It depends on Zn(2+) as a cofactor. The cofactor is Mn(2+). Post-translationally, phosphorylated by PRKDC. As to expression, expressed ubiquitously in most organs at a low level, highly expressed in testis, ovary and spleen.

The protein resides in the nucleus. It is found in the nucleolus. The protein localises to the nucleoplasm. Its subcellular location is the chromosome. It carries out the reaction Couples ATP hydrolysis with the unwinding of duplex DNA by translocating in the 3'-5' direction.. The catalysed reaction is ATP + H2O = ADP + phosphate + H(+). With respect to regulation, zinc ions stimulate the exonuclease activity. Functionally, multifunctional enzyme that has magnesium and ATP-dependent 3'-5' DNA-helicase activity. Has 3'-&gt;5' exonuclease activity on forked dsDNA. Has no nuclease activity towards single-stranded DNA or blunt-ended double-stranded DNA. Binds preferentially to DNA substrates containing alternate secondary structures, such as replication forks and Holliday junctions. May play an important role in the dissociation of joint DNA molecules that can arise as products of homologous recombination, at stalled replication forks or during DNA repair. Alleviates stalling of DNA polymerases at the site of DNA lesions. Unwinds some G-quadruplex DNA. Plays a role in the formation of DNA replication focal centers; stably associates with foci elements generating binding sites for RP-A. Plays a role in double-strand break repair after gamma-irradiation. The sequence is that of Bifunctional 3'-5' exonuclease/ATP-dependent helicase WRN (Wrn) from Mus musculus (Mouse).